The sequence spans 161 residues: Globin CTT-VIIB-4 (161 aa).

A signal peptide spans 1-16 (MKFFAVLALCIVGAIA). Positions 18 to 161 (PLTADEASLV…NTMAVAVAHL (144 aa)) constitute a Globin domain. Heme b contacts are provided by His76 and His111.

This sequence belongs to the globin family. Homodimer.

The protein is Globin CTT-VIIB-4 (CTT-7B4) of Chironomus thummi thummi (Midge).